Reading from the N-terminus, the 316-residue chain is Serpentine receptor class gamma-8 (316 aa).

The next 7 helical transmembrane spans lie at 28–48 (FVQVAYLAPAVFLYSRILYVV), 60–80 (PFFMVYSMVGLILVLLDIFIT), 106–126 (LYYPLLNYLHCAQPFIQIFLT), 147–167 (FSRILILNLIAPFFFIWNTII), 186–206 (IIPWASMSLFLFIIRSAVVMI), 235–255 (ACAANSICFLVPAVFEAMKVL), and 267–287 (LVQPFAWDVLNVGSPLVMIFA).

The protein belongs to the nematode receptor-like protein srg family.

It is found in the membrane. The chain is Serpentine receptor class gamma-8 (srg-8) from Caenorhabditis elegans.